Reading from the N-terminus, the 164-residue chain is UPF0304 protein ECA3037 (164 aa).

This sequence belongs to the UPF0304 family.

This chain is UPF0304 protein ECA3037, found in Pectobacterium atrosepticum (strain SCRI 1043 / ATCC BAA-672) (Erwinia carotovora subsp. atroseptica).